The following is a 228-amino-acid chain: Isoprenyl transferase (228 aa).

D9 is an active-site residue. Residue D9 coordinates Mg(2+). Substrate is bound by residues 10-13 (GNGR), W14, R22, H26, and 54-56 (STE). The active-site Proton acceptor is the N57. Substrate is bound by residues W58, R60, R175, and 181–183 (RMS). Residue E194 participates in Mg(2+) binding.

This sequence belongs to the UPP synthase family. In terms of assembly, homodimer. Mg(2+) is required as a cofactor.

Catalyzes the condensation of isopentenyl diphosphate (IPP) with allylic pyrophosphates generating different type of terpenoids. This Treponema pallidum (strain Nichols) protein is Isoprenyl transferase.